The sequence spans 293 residues: N-acetylneuraminate lyase (293 aa).

Positions 48 and 49 each coordinate aceneuramate. Catalysis depends on tyrosine 137, which acts as the Proton donor. Lysine 165 functions as the Schiff-base intermediate with substrate in the catalytic mechanism. The aceneuramate site is built by threonine 167, glycine 189, aspartate 191, glutamate 192, and serine 208.

This sequence belongs to the DapA family. NanA subfamily. As to quaternary structure, homotetramer.

It localises to the cytoplasm. It carries out the reaction aceneuramate = aldehydo-N-acetyl-D-mannosamine + pyruvate. It participates in amino-sugar metabolism; N-acetylneuraminate degradation; D-fructose 6-phosphate from N-acetylneuraminate: step 1/5. Catalyzes the reversible aldol cleavage of N-acetylneuraminic acid (sialic acid; Neu5Ac) to form pyruvate and N-acetylmannosamine (ManNAc) via a Schiff base intermediate. The sequence is that of N-acetylneuraminate lyase from Staphylococcus aureus (strain Mu3 / ATCC 700698).